The following is an 855-amino-acid chain: DNA mismatch repair protein MutS (855 aa).

613–620 (GPNMGGKS) serves as a coordination point for ATP. Positions 795–816 (ETTSLPHEVPSQQSGKPASPMQ) are disordered. The segment covering 796 to 816 (TTSLPHEVPSQQSGKPASPMQ) has biased composition (polar residues).

The protein belongs to the DNA mismatch repair MutS family.

Functionally, this protein is involved in the repair of mismatches in DNA. It is possible that it carries out the mismatch recognition step. This protein has a weak ATPase activity. The protein is DNA mismatch repair protein MutS of Pseudomonas paraeruginosa (strain DSM 24068 / PA7) (Pseudomonas aeruginosa (strain PA7)).